The primary structure comprises 37 residues: Trypsin inhibitor 3 (37 aa).

Cystine bridges form between Cys4-Cys21, Cys11-Cys25, and Cys20-Cys36.

Functionally, trypsin inhibitor. The sequence is that of Trypsin inhibitor 3 from Spinacia oleracea (Spinach).